A 207-amino-acid polypeptide reads, in one-letter code: dTTP/UTP pyrophosphatase (207 aa).

Aspartate 68 functions as the Proton acceptor in the catalytic mechanism.

It belongs to the Maf family. YhdE subfamily. It depends on a divalent metal cation as a cofactor.

The protein localises to the cytoplasm. The catalysed reaction is dTTP + H2O = dTMP + diphosphate + H(+). The enzyme catalyses UTP + H2O = UMP + diphosphate + H(+). Its function is as follows. Nucleoside triphosphate pyrophosphatase that hydrolyzes dTTP and UTP. May have a dual role in cell division arrest and in preventing the incorporation of modified nucleotides into cellular nucleic acids. This is dTTP/UTP pyrophosphatase from Staphylothermus marinus (strain ATCC 43588 / DSM 3639 / JCM 9404 / F1).